A 447-amino-acid chain; its full sequence is 23S rRNA (uracil(1939)-C(5))-methyltransferase RlmD (447 aa).

The region spanning arginine 7–glutamate 66 is the TRAM domain. Positions 79, 85, 88, and 168 each coordinate [4Fe-4S] cluster. S-adenosyl-L-methionine is bound by residues glutamine 275, phenylalanine 304, asparagine 309, glutamate 325, aspartate 352, and aspartate 374. Catalysis depends on cysteine 400, which acts as the Nucleophile.

This sequence belongs to the class I-like SAM-binding methyltransferase superfamily. RNA M5U methyltransferase family. RlmD subfamily.

It carries out the reaction uridine(1939) in 23S rRNA + S-adenosyl-L-methionine = 5-methyluridine(1939) in 23S rRNA + S-adenosyl-L-homocysteine + H(+). Functionally, catalyzes the formation of 5-methyl-uridine at position 1939 (m5U1939) in 23S rRNA. The polypeptide is 23S rRNA (uracil(1939)-C(5))-methyltransferase RlmD (Nitrosococcus oceani (strain ATCC 19707 / BCRC 17464 / JCM 30415 / NCIMB 11848 / C-107)).